The sequence spans 64 residues: UPF0434 protein BAB2_0345 (64 aa).

Belongs to the UPF0434 family.

This chain is UPF0434 protein BAB2_0345, found in Brucella abortus (strain 2308).